The primary structure comprises 336 residues: C4-dicarboxylate-binding periplasmic protein DctP (336 aa).

Residues methionine 1 to alanine 31 form the signal peptide. 6 residues coordinate (S)-malate: lysine 48, lysine 101, arginine 176, asparagine 216, asparagine 220, and tyrosine 243. Residues lysine 48, lysine 101, arginine 176, asparagine 216, asparagine 220, and tyrosine 243 each contribute to the succinate site.

The protein belongs to the bacterial solute-binding protein 7 family. The complex comprises the extracytoplasmic solute receptor protein DctP, and the two transmembrane proteins DctQ and DctM.

The protein localises to the periplasm. In terms of biological role, part of the tripartite ATP-independent periplasmic (TRAP) transport system DctPQM involved in C4-dicarboxylates uptake. Required for the utilization of succinate, fumarate, L-malate and alpha-ketoglutarate. Binds succinate and malate. The chain is C4-dicarboxylate-binding periplasmic protein DctP from Shewanella loihica (strain ATCC BAA-1088 / PV-4).